The primary structure comprises 330 residues: Aspartate--ammonia ligase (330 aa).

The protein belongs to the class-II aminoacyl-tRNA synthetase family. AsnA subfamily.

The protein localises to the cytoplasm. The enzyme catalyses L-aspartate + NH4(+) + ATP = L-asparagine + AMP + diphosphate + H(+). It participates in amino-acid biosynthesis; L-asparagine biosynthesis; L-asparagine from L-aspartate (ammonia route): step 1/1. This is Aspartate--ammonia ligase from Histophilus somni (strain 2336) (Haemophilus somnus).